A 757-amino-acid chain; its full sequence is Voltage-gated potassium channel KCNC3 (757 aa).

Residues 1-78 (MLSSVCVSSF…CPGLPAAAMG (78 aa)) form an important for normal N-type inactivation region. Residues 1–87 (MLSSVCVSSF…GRHGGGGGDS (87 aa)) are disordered. Residues 1–290 (MLSSVCVSSF…EDPYSSRAAR (290 aa)) lie on the Cytoplasmic side of the membrane. Over residues 21 to 40 (PAPPPQPPESPPPPPLPPQQ) the composition is skewed to pro residues. A compositionally biased stretch (low complexity) spans 41–52 (QQPAQPGPAASP). Zn(2+) contacts are provided by His157, Cys163, Cys184, and Cys185. Residues 210 to 219 (AANAANAAGA) show a composition bias toward low complexity. The tract at residues 210–232 (AANAANAAGAHDGGLDDEAGAGG) is disordered. The chain crosses the membrane as a helical span at residues 291–309 (YVAFASLFFILISITTFCL). 2 N-linked (GlcNAc...) asparagine glycosylation sites follow: Asn320 and Asn336. The chain crosses the membrane as a helical span at residues 351 to 370 (VEGVCVVWFTFEFLMRITFC). Over 371 to 379 (PDKVEFLKS) the chain is Cytoplasmic. Residues 380 to 398 (SLNIIDCVAILPFYLEVGL) form a helical membrane-spanning segment. A helical; Voltage-sensor membrane pass occupies residues 412-434 (FLRVVRFVRILRIFKLTRHFVGL). The Cytoplasmic portion of the chain corresponds to 435-447 (RVLGHTLRASTNE). A helical membrane pass occupies residues 448 to 469 (FLLLIIFLALGVLIFATMIYYA). The N-linked (GlcNAc...) asparagine glycan is linked to Asn483. The K(+) site is built by Thr503, Leu504, Gly505, and Tyr506. The Selectivity filter motif lies at 503–508 (TLGYGD). A helical membrane pass occupies residues 518 to 539 (LVGALCALAGVLTIAMPVPVIV). Over 540–757 (NNFGMYYSLA…NANAAAWISP (218 aa)) the chain is Cytoplasmic. The disordered stretch occupies residues 556-613 (PKKKNKHIPRPPQPGSPNYCKPDPPPPPPPHPHHGSGGISPPPPITPPSMGVTVAGAY). Arg625 carries the post-translational modification Omega-N-methylarginine. The disordered stretch occupies residues 682–746 (QPAMSPEDKS…KPGPPSFLPD (65 aa)). Ser686 and Ser691 each carry phosphoserine. The span at 728–743 (PPLPPQDWRKPGPPSF) shows a compositional bias: pro residues.

It belongs to the potassium channel family. C (Shaw) (TC 1.A.1.2) subfamily. Kv3.3/KCNC3 sub-subfamily. As to quaternary structure, homotetramer. Heterotetramer with KCNC1. Interacts (via C-terminus) with HAX1; this interaction modulates channel gating. Identified in a complex with ACTR3, a subunit of the Arp2/3 complex; this interaction is indirect and depends on the presence of HAX1. In terms of processing, N-glycosylated.

It localises to the cell membrane. It is found in the presynaptic cell membrane. Its subcellular location is the perikaryon. The protein localises to the cell projection. The protein resides in the axon. It localises to the dendrite. It is found in the dendritic spine membrane. Its subcellular location is the cytoplasm. The protein localises to the cell cortex. The protein resides in the cytoskeleton. It carries out the reaction K(+)(in) = K(+)(out). Functionally, voltage-gated potassium channel that plays an important role in the rapid repolarization of fast-firing brain neurons. The channel opens in response to the voltage difference across the membrane, forming a potassium-selective channel through which potassium ions pass in accordance with their electrochemical gradient. The channel displays rapid activation and inactivation kinetics. It plays a role in the regulation of the frequency, shape and duration of action potentials in Purkinje cells. Required for normal survival of cerebellar neurons, probably via its role in regulating the duration and frequency of action potentials that in turn regulate the activity of voltage-gated Ca(2+) channels and cellular Ca(2+) homeostasis. Required for normal motor function. Plays a role in the reorganization of the cortical actin cytoskeleton and the formation of actin veil structures in neuronal growth cones via its interaction with HAX1 and the Arp2/3 complex. The protein is Voltage-gated potassium channel KCNC3 (KCNC3) of Homo sapiens (Human).